The chain runs to 128 residues: NADH dehydrogenase [ubiquinone] 1 beta subcomplex subunit 6 (128 aa).

Position 2 is an N-acetylserine (Ser2). Lys24 carries the post-translational modification N6-acetyllysine. The helical transmembrane segment at 64–86 threads the bilayer; the sequence is TYRHSIFAFTHVLIPVWIIHYYL.

Belongs to the complex I NDUFB6 subunit family. Complex I is composed of 45 different subunits.

It is found in the mitochondrion inner membrane. Functionally, accessory subunit of the mitochondrial membrane respiratory chain NADH dehydrogenase (Complex I), that is believed not to be involved in catalysis. Complex I functions in the transfer of electrons from NADH to the respiratory chain. The immediate electron acceptor for the enzyme is believed to be ubiquinone. The protein is NADH dehydrogenase [ubiquinone] 1 beta subcomplex subunit 6 (NDUFB6) of Bos taurus (Bovine).